We begin with the raw amino-acid sequence, 280 residues long: F-box only protein 27 (280 aa).

Positions 1–26 (MGAWASRGRAARVPAPEPESEPEEAL) are disordered. The 48-residue stretch at 25-72 (ALDLSQLPPELLLVVLSHVPPRTLLGRCRQVCRGWRALVDGQALWLLI) folds into the F-box domain. The 178-residue stretch at 100–277 (PCPLGRFCAR…VTNSSVIVRV (178 aa)) folds into the FBA domain.

In terms of assembly, part of a SCF (SKP1-cullin-F-box) protein ligase complex. Interacts with SKP1 and CUL1.

Functionally, substrate-recognition component of the SCF (SKP1-CUL1-F-box protein)-type E3 ubiquitin ligase complex. Able to recognize and bind complex-type oligosaccharides. This chain is F-box only protein 27 (FBXO27), found in Macaca fascicularis (Crab-eating macaque).